The primary structure comprises 83 residues: Alpha-conotoxin QcIA (83 aa).

The N-terminal stretch at Met-1–Ser-21 is a signal peptide. A propeptide spanning residues Phe-22–Arg-48 is cleaved from the precursor. 2 disulfides stabilise this stretch: Cys-51–Cys-57 and Cys-52–Cys-65. Residues Ser-53–Pro-55 form a ser-Xaa-Pro motif, crucial for potent interaction with nAChR region. Positions Arg-66–Ala-83 are excised as a propeptide.

This sequence belongs to the conotoxin A superfamily. Expressed by the venom duct.

It localises to the secreted. In terms of biological role, alpha-conotoxins bind to the nicotinic acetylcholine receptors (nAChR) and inhibit them. A synthetic amidated version of this toxin potently and preferentially antagonizes neuronal rat alpha-3-beta-2 (IC(50)=55.7 nM) and alpha-6/alpha-3-beta-4 (IC(50)=90.69 nM) nAChRs. This Conus quercinus (Oak cone) protein is Alpha-conotoxin QcIA.